The chain runs to 121 residues: Securin (121 aa).

A disordered region spans residues 1 to 24 (RATEKSVKTNGPLKQKQTTFSAKK). Short sequence motifs (TEK-box) lie at residues 3–5 (TEK) and 26–28 (TEK). Positions 93–121 (LGPPSPLNMPSPPWESDVLQSPSSILSTL) are disordered. The SH3-binding signature appears at 95-105 (PPSPLNMPSPP). Pro residues predominate over residues 95 to 105 (PPSPLNMPSPP). At S97 the chain carries Phosphoserine; by CDK1. The segment covering 110 to 121 (VLQSPSSILSTL) has biased composition (polar residues).

This sequence belongs to the securin family. Interacts with the caspase-like ESPL1, and prevents its protease activity probably by covering its active site. Interacts with p53/TP53 and blocks its activity probably by blocking its binding to DNA. Interacts with the Ku 70 kDa subunit of ds-DNA kinase. Interacts with PTTG1IP. Interacts with RPS10 and DNAJA1. Phosphorylated by CDK1 during mitosis. In terms of processing, phosphorylated in vitro by ds-DNA kinase. Post-translationally, ubiquitinated through 'Lys-11' linkage of ubiquitin moieties by the anaphase promoting complex (APC) at the onset of anaphase, conducting to its degradation. 'Lys-11'-linked ubiquitination is mediated by the E2 ligase UBE2C/UBCH10.

The protein resides in the cytoplasm. Its subcellular location is the nucleus. Its function is as follows. Regulatory protein, which plays a central role in chromosome stability, in the p53/TP53 pathway, and DNA repair. Probably acts by blocking the action of key proteins. During the mitosis, it blocks Separase/ESPL1 function, preventing the proteolysis of the cohesin complex and the subsequent segregation of the chromosomes. At the onset of anaphase, it is ubiquitinated, conducting to its destruction and to the liberation of ESPL1. Its function is however not limited to a blocking activity, since it is required to activate ESPL1. Negatively regulates the transcriptional activity and related apoptosis activity of p53/TP53. The negative regulation of p53/TP53 may explain the strong transforming capability of the protein when it is overexpressed. May also play a role in DNA repair via its interaction with Ku, possibly by connecting DNA damage-response pathways with sister chromatid separation. The protein is Securin (PTTG1) of Sus scrofa (Pig).